Consider the following 227-residue polypeptide: Cytidylate kinase (227 aa).

12–20 (GPSGAGKGT) lines the ATP pocket.

The protein belongs to the cytidylate kinase family. Type 1 subfamily.

The protein resides in the cytoplasm. It catalyses the reaction CMP + ATP = CDP + ADP. It carries out the reaction dCMP + ATP = dCDP + ADP. The chain is Cytidylate kinase from Erwinia tasmaniensis (strain DSM 17950 / CFBP 7177 / CIP 109463 / NCPPB 4357 / Et1/99).